Here is a 110-residue protein sequence, read N- to C-terminus: Protein OPG154 (110 aa).

A coiled-coil region spans residues 36–101; that stretch reads VKADEDDNEE…AMISLAKKID (66 aa).

The protein belongs to the orthopoxvirus OPG154 protein family. In terms of assembly, homohexamers, covalently linked. Interacts with OPG144 and OPG153.

The protein resides in the virion. Its function is as follows. Structural protein involved in the envelopment of mature virion (MV) to form the wrapped virion (WV). The wrapping consists of the addition of Golgi membranes to the mature virion. Participates in mature virion (MV) movement within the infected cell. May play an indirect role in MV-cell fusion. The chain is Protein OPG154 (OPG154) from Vaccinia virus (strain Western Reserve) (VACV).